A 186-amino-acid polypeptide reads, in one-letter code: ATP synthase subunit b 3 (186 aa).

Residues 5–25 traverse the membrane as a helical segment; sequence LLPALLTFSATPALAAKGPFF.

Belongs to the ATPase B chain family. F-type ATPases have 2 components, F(1) - the catalytic core - and F(0) - the membrane proton channel. F(1) has five subunits: alpha(3), beta(3), gamma(1), delta(1), epsilon(1). F(0) has three main subunits: a(1), b(2) and c(10-14). The alpha and beta chains form an alternating ring which encloses part of the gamma chain. F(1) is attached to F(0) by a central stalk formed by the gamma and epsilon chains, while a peripheral stalk is formed by the delta and b chains.

The protein resides in the cell inner membrane. In terms of biological role, f(1)F(0) ATP synthase produces ATP from ADP in the presence of a proton or sodium gradient. F-type ATPases consist of two structural domains, F(1) containing the extramembraneous catalytic core and F(0) containing the membrane proton channel, linked together by a central stalk and a peripheral stalk. During catalysis, ATP synthesis in the catalytic domain of F(1) is coupled via a rotary mechanism of the central stalk subunits to proton translocation. Functionally, component of the F(0) channel, it forms part of the peripheral stalk, linking F(1) to F(0). The protein is ATP synthase subunit b 3 of Dinoroseobacter shibae (strain DSM 16493 / NCIMB 14021 / DFL 12).